The sequence spans 411 residues: Keratin, type I cytoskeletal 12 (411 aa).

The interval 1-42 (DHDYEFPGIQAFAGLGMGFGGSPGGGSLYLPSGNDGGLLSGS) is head. The coil 1A stretch occupies residues 43–78 (EKETMQNLNDRLASYLDKVRALEDANAELENKIREW). In terms of domain architecture, IF rod spans 43–359 (EKETMQNLND…RLLDGEAQGD (317 aa)). Residues 83–101 (GHGHGDCGPQHDYSKYHPL) are linker 1. The coil 1B stretch occupies residues 102 to 193 (IEDLRNKIIS…KNHEEELQSC (92 aa)). The linker 12 stretch occupies residues 194–216 (RAGGPGEVSVEMDAAPGVDLTRL). The interval 217 to 354 (LNDMRAQYEA…IETYRRLLDG (138 aa)) is coil 2. The tract at residues 355–411 (EAQGDGLDESSAMTGSRSQAQSIDSSKDPSKTRKIKTIVQEVVNGEVVSSQVQEIQN) is tail. Positions 356–387 (AQGDGLDESSAMTGSRSQAQSIDSSKDPSKTR) are disordered. Residues 365-378 (SAMTGSRSQAQSID) are compositionally biased toward polar residues.

This sequence belongs to the intermediate filament family. Heterotetramer of two type I and two type II keratins. Keratin-3 associates with keratin-12. In terms of tissue distribution, cornea specific. Associated mainly with all layers of the central corneal epithelium and also found in the suprabasal limbal epithelium.

Involved in corneal epithelium organization, integrity and corneal keratin expression. This is Keratin, type I cytoskeletal 12 (KRT12) from Oryctolagus cuniculus (Rabbit).